A 162-amino-acid polypeptide reads, in one-letter code: MKCLLISLALWLGTVGTRGTEPELSETQRRSLQVALEEFHKHPPVQLAFQEIGVDRAEEVLFSAGTFVRLEFKLQQTNCPKKDWKKPECTIKPNGRRRKCLACIKMDPKGKILGRIVHCPILKQGPQDPQELQCIKIAQAGEDPHGYFLPGQFAFSRALRTK.

A signal peptide spans Met1–Thr20. Intrachain disulfides connect Cys79–Cys89, Cys100–Cys119, and Cys103–Cys134. Positions Arg157 to Lys162 are excised as a propeptide.

Secreted in an inactive precursor form, prochemerin, which is proteolytically processed by a variety of extracellular proteases to generate forms with differing levels of bioactivity. For example, the removal of six amino acids results in chemerin-156, which exhibits the highest activity, while removal of seven amino acids results in chemerin-155 which has slightly less activity. Some proteases are able to cleave at more than one site and chemerin forms may be sequentially processed by different enzymes to modulate activity levels. The coordinated expression and activity of chemerin-modifying enzymes is essential for regulating its bioactivation, inactivation and, consequently, biological function. Cathepsin G cleaves seven C-terminal amino acids from prochemerin (chemerin-155), elastase is able to cleave six (chemerin-156), eight (chemerin-154) or eleven (chemerin-151), plasmin cleaves five amino acids (chemerin-157), and tryptase cleaves five (chemerin-157) or eight (chemerin-154). Multiple cleavages might be required to fully activate chemerin, with an initial tryptase cleavage resulting in chemerin with low activity (chemerin-157), and a second cleavage by carboxypeptidase N or B producing highly active chemerin (chemerin-156). As to expression, expressed in the differentiated adipocytes (at protein level). Abundantly expressed in the liver, adipose tissue including visceral, epididymal, and brown adipose tissue.

It localises to the secreted. In terms of biological role, adipocyte-secreted protein (adipokine) that regulates adipogenesis, metabolism and inflammation through activation of the chemokine-like receptor 1 (CMKLR1). Also acts as a ligand for CMKLR2. Can also bind to C-C chemokine receptor-like 2 (CCRL2), but with a lower affinity than it does to CMKLR1 or CMKLR2. Positively regulates adipocyte differentiation, modulates the expression of adipocyte genes involved in lipid and glucose metabolism and might play a role in angiogenesis, a process essential for the expansion of white adipose tissue. Also acts as a pro-inflammatory adipokine, causing an increase in secretion of pro-inflammatory and prodiabetic adipokines, which further impair adipose tissue metabolic function and have negative systemic effects including impaired insulin sensitivity, altered glucose and lipid metabolism, and a decrease in vascular function in other tissues. Can have both pro- and anti-inflammatory properties depending on the modality of enzymatic cleavage by different classes of proteases. Acts as a chemotactic factor for leukocyte populations expressing CMKLR1, particularly immature plasmacytoid dendritic cells, but also immature myeloid DCs, macrophages and natural killer cells. Exerts an anti-inflammatory role by preventing TNF/TNFA-induced VCAM1 expression and monocytes adhesion in vascular endothelial cells. The effect is mediated via inhibiting activation of NF-kappa-B and CRK/p38 through stimulation of AKT1/NOS3 signaling and nitric oxide production. Exhibits an antimicrobial function in the skin. This Mus musculus (Mouse) protein is Retinoic acid receptor responder protein 2 (Rarres2).